Reading from the N-terminus, the 1457-residue chain is Bridge-like lipid transfer protein family member 3B (1457 aa).

The Chorein N-terminal domain maps to 3–94 (GIIKKQILKH…DKVIMEMSTC (92 aa)). Disordered stretches follow at residues 267–295 (STEQ…KTPQ) and 409–449 (DRNL…PQPS). Polar residues predominate over residues 278-295 (PTQSSTVTSSAQHVKTPQ). S414, S418, S774, and S934 each carry phosphoserine. 3 disordered regions span residues 975–1038 (SEDE…TGKG), 1056–1099 (ASLS…LSVS), and 1145–1183 (SNTS…TQEN). Polar residues predominate over residues 980-995 (SGLSHKSGSGEMTSEG). The residue at position 1008 (S1008) is a Phosphoserine. Polar residues predominate over residues 1145–1180 (SNTSCQSPAESVNTSANTQTCGEASPEAVSTNSEGT). Residues 1410 to 1455 (ANFLDITREQLMEENECLRQRLAQAKMELAEAHSARDELLHQMKRM) are a coiled coil.

In terms of assembly, homodimer (via N-terminus). Associates with the Golgi-associated retrograde protein (GARP) complex. Interacts with GARP complex component VPS52. Interacts (via C-terminal coiled-coil domain) with STX6.

The protein localises to the cytoplasm. Its subcellular location is the cytosol. It localises to the early endosome. In terms of biological role, tube-forming lipid transport protein which mediates the transfer of lipids between membranes at organelle contact sites. Required for retrograde traffic of vesicle clusters in the early endocytic pathway to the Golgi complex. The protein is Bridge-like lipid transfer protein family member 3B (Bltp3b) of Mus musculus (Mouse).